The primary structure comprises 248 residues: MITERVKMEVIGLEIPLISGNEDYTLAELISKYPLKDKDIIVIAETVVSKSEKNVILKDTIKPSNEAIELSKKLGKEPEVVQVILDESNETVRLGPNFIVTETKHGFVCANSGVDESNTSKGIKPLPKNPDKSANEIRKGIEEITGKNVGVIINDSMGRPFRKGSCGVAIGVSGVCGLWDRKGEKDLFGRELKTTEVGIADELAATASVVMGQSNEGIPLVIIRNAPVPFNDGTGKELIRKKEEDVFR.

GTP-binding positions include 15–18 (IPLI), 45–46 (ET), and K50. Residue D115 participates in a divalent metal cation binding. N118 provides a ligand contact to GTP. D155, S156, and Q213 together coordinate a divalent metal cation. 211 to 218 (MGQSNEGI) is a GTP binding site.

It belongs to the CofE family. As to quaternary structure, homodimer. Requires Mg(2+) as cofactor. The cofactor is Mn(2+). K(+) is required as a cofactor.

The enzyme catalyses oxidized coenzyme F420-0 + GTP + L-glutamate = oxidized coenzyme F420-1 + GDP + phosphate + H(+). The catalysed reaction is oxidized coenzyme F420-1 + GTP + L-glutamate = oxidized coenzyme F420-2 + GDP + phosphate + H(+). Its pathway is cofactor biosynthesis; coenzyme F420 biosynthesis. Catalyzes the GTP-dependent successive addition of two or more gamma-linked L-glutamates to the L-lactyl phosphodiester of 7,8-didemethyl-8-hydroxy-5-deazariboflavin (F420-0) to form coenzyme F420-0-glutamyl-glutamate (F420-2) or polyglutamated F420 derivatives. The protein is Coenzyme F420:L-glutamate ligase of Methanococcus maripaludis (strain C7 / ATCC BAA-1331).